Reading from the N-terminus, the 367-residue chain is Inositol-3-phosphate synthase (367 aa).

At Ser-2 the chain carries N-acetylserine. An Isoglutamyl lysine isopeptide (Lys-Gln) (interchain with Q-Cter in protein Pup) cross-link involves residue Lys-73. The NAD(+) site is built by Asp-78, Ala-137, Tyr-157, Ser-200, Asp-235, and Lys-248.

The protein belongs to the myo-inositol 1-phosphate synthase family. Requires NAD(+) as cofactor. In terms of processing, pupylated at Lys-73 by the prokaryotic ubiquitin-like protein Pup, which leads to its degradation by the proteasome.

The catalysed reaction is D-glucose 6-phosphate = 1D-myo-inositol 3-phosphate. In terms of biological role, key enzyme in myo-inositol biosynthesis pathway that catalyzes the conversion of glucose 6-phosphate to 1D-myo-inositol 3-phosphate in a NAD-dependent manner. The chain is Inositol-3-phosphate synthase (ino1) from Mycobacterium tuberculosis (strain ATCC 25618 / H37Rv).